Reading from the N-terminus, the 297-residue chain is UBX domain-containing protein 1 (297 aa).

Ala2 is modified (N-acetylalanine). In terms of domain architecture, UBA spans 2 to 42 (AELTALESLIEMGFPRGRAEKALALTGNQGIEAAMDWLMEH). Residues 38–212 (WLMEHEDDPD…QEPPTKREYD (175 aa)) are disordered. Positions 42-52 (HEDDPDVDEPL) are enriched in acidic residues. The interval 43–297 (EDDPDVDEPL…VLIVAKKCPS (255 aa)) is interaction with BRCA1. Basic and acidic residues-rich tracts occupy residues 86–122 (LTEE…EREK) and 137–177 (KLQE…ERAQ). A coiled-coil region spans residues 86–172 (LTEEERQEQT…RVREKIERDK (87 aa)). Ser199 carries the post-translational modification Phosphoserine. Ser200 is modified (phosphoserine; by MAPK12). Thr207 and Thr229 each carry phosphothreonine. Residues 209-291 (REYDQCRIQV…GLVPSAVLIV (83 aa)) enclose the UBX domain. A Phosphoserine modification is found at Ser270.

Component of a complex required to couple retrotranslocation, ubiquitination and deglycosylation composed of NGLY1, SAKS1, AMFR, VCP and RAD23B. Interacts with HOMER2. Interacts directly with VCP. Interacts with BRCA1 and BARD1; interaction takes place when BRCA1 is not autoubiquitinated bur is strongly enhanced in the presence of autoubiquitinated BRCA1.

Its subcellular location is the cytoplasm. In terms of biological role, ubiquitin-binding protein that interacts with the BRCA1-BARD1 heterodimer, and regulates its activity. Specifically binds 'Lys-6'-linked polyubiquitin chains. Interaction with autoubiquitinated BRCA1, leads to inhibit the E3 ubiquitin-protein ligase activity of the BRCA1-BARD1 heterodimer. Component of a complex required to couple deglycosylation and proteasome-mediated degradation of misfolded proteins in the endoplasmic reticulum that are retrotranslocated in the cytosol. The sequence is that of UBX domain-containing protein 1 (Ubxn1) from Rattus norvegicus (Rat).